A 371-amino-acid chain; its full sequence is N-acetyldiaminopimelate deacetylase (371 aa).

The active site involves aspartate 68. The active-site Proton acceptor is the glutamate 127.

It belongs to the peptidase M20A family. N-acetyldiaminopimelate deacetylase subfamily.

It catalyses the reaction N-acetyl-(2S,6S)-2,6-diaminopimelate + H2O = (2S,6S)-2,6-diaminopimelate + acetate. The protein operates within amino-acid biosynthesis; L-lysine biosynthesis via DAP pathway; LL-2,6-diaminopimelate from (S)-tetrahydrodipicolinate (acetylase route): step 3/3. In terms of biological role, catalyzes the conversion of N-acetyl-diaminopimelate to diaminopimelate and acetate. The polypeptide is N-acetyldiaminopimelate deacetylase (Listeria innocua serovar 6a (strain ATCC BAA-680 / CLIP 11262)).